Reading from the N-terminus, the 125-residue chain is Large ribosomal subunit protein bL20 (125 aa).

The protein belongs to the bacterial ribosomal protein bL20 family.

Its function is as follows. Binds directly to 23S ribosomal RNA and is necessary for the in vitro assembly process of the 50S ribosomal subunit. It is not involved in the protein synthesizing functions of that subunit. The chain is Large ribosomal subunit protein bL20 from Zymomonas mobilis subsp. mobilis (strain ATCC 31821 / ZM4 / CP4).